The primary structure comprises 131 residues: MKLGAYYKGGDLKKPSGGKKRKVRRTKKKALGGGPPQIPKLGEEDVRIVERVRGGNIKVRLREAKYANVYIPKEKRYVKAKILSIVETPANPDFARRNYMVKGAVIRTEVGKAVITSQPGQDGIINAILIE.

A disordered region spans residues 1-38; that stretch reads MKLGAYYKGGDLKKPSGGKKRKVRRTKKKALGGGPPQI. Residues 16-30 are compositionally biased toward basic residues; the sequence is SGGKKRKVRRTKKKA.

It belongs to the eukaryotic ribosomal protein eS8 family. In terms of assembly, part of the 30S ribosomal subunit.

This is Small ribosomal subunit protein eS8 from Pyrobaculum arsenaticum (strain DSM 13514 / JCM 11321 / PZ6).